Reading from the N-terminus, the 502-residue chain is ATP synthase subunit alpha, chloroplastic (502 aa).

Residue 170–177 (GDRQTGKT) coordinates ATP.

The protein belongs to the ATPase alpha/beta chains family. In terms of assembly, F-type ATPases have 2 components, CF(1) - the catalytic core - and CF(0) - the membrane proton channel. CF(1) has five subunits: alpha(3), beta(3), gamma(1), delta(1), epsilon(1). CF(0) has four main subunits: a, b, b' and c.

It localises to the plastid. It is found in the chloroplast thylakoid membrane. The catalysed reaction is ATP + H2O + 4 H(+)(in) = ADP + phosphate + 5 H(+)(out). Its function is as follows. Produces ATP from ADP in the presence of a proton gradient across the membrane. The alpha chain is a regulatory subunit. In Tupiella akineta (Green alga), this protein is ATP synthase subunit alpha, chloroplastic.